The following is a 142-amino-acid chain: ATP synthase epsilon chain (142 aa).

Belongs to the ATPase epsilon chain family. In terms of assembly, F-type ATPases have 2 components, CF(1) - the catalytic core - and CF(0) - the membrane proton channel. CF(1) has five subunits: alpha(3), beta(3), gamma(1), delta(1), epsilon(1). CF(0) has three main subunits: a, b and c.

Its subcellular location is the cell inner membrane. Functionally, produces ATP from ADP in the presence of a proton gradient across the membrane. This chain is ATP synthase epsilon chain, found in Haemophilus influenzae (strain 86-028NP).